Here is a 617-residue protein sequence, read N- to C-terminus: Electron transfer flavoprotein-ubiquinone oxidoreductase, mitochondrial (617 aa).

Residues 1-33 (MLVPLAKLSCPAYQCFHALKIKKNYLPLCATRW) constitute a mitochondrion transit peptide. 71–85 (VVIVGAGPAGLSAAV) contacts FAD. At lysine 96 the chain carries N6-acetyllysine. Residues 109-130 (IGAHTLSGACLDPGAFKELFPD) lie within the membrane without spanning it. Residues lysine 132 and lysine 223 each carry the N6-acetyllysine modification. Residues glycine 305 and glycine 306 each coordinate a ubiquinone. Position 357 is an N6-acetyllysine (lysine 357). An intramembrane segment occupies 428 to 447 (MGLHVTEYEDNLKNSWVWKE). Position 551 is a phosphoserine (serine 551). Residues cysteine 561, cysteine 586, cysteine 589, and cysteine 592 each coordinate [4Fe-4S] cluster. The region spanning 577–606 (FRLQINAQNCVHCKTCDIKDPSQNINWVVP) is the 4Fe-4S ferredoxin-type domain.

This sequence belongs to the ETF-QO/FixC family. Monomer. [4Fe-4S] cluster is required as a cofactor. FAD serves as cofactor.

It localises to the mitochondrion inner membrane. The enzyme catalyses a ubiquinone + reduced [electron-transfer flavoprotein] = a ubiquinol + oxidized [electron-transfer flavoprotein] + H(+). In terms of biological role, accepts electrons from ETF and reduces ubiquinone. The sequence is that of Electron transfer flavoprotein-ubiquinone oxidoreductase, mitochondrial (ETFDH) from Pongo abelii (Sumatran orangutan).